The primary structure comprises 273 residues: 4-hydroxy-tetrahydrodipicolinate reductase (273 aa).

Residues 10–15 (GAGGRM), glutamate 36, 100–102 (GTT), and 124–127 (SGNM) each bind NAD(+). Catalysis depends on histidine 157, which acts as the Proton donor/acceptor. Position 158 (histidine 158) interacts with (S)-2,3,4,5-tetrahydrodipicolinate. Catalysis depends on lysine 161, which acts as the Proton donor. A (S)-2,3,4,5-tetrahydrodipicolinate-binding site is contributed by 167-168 (GT).

It belongs to the DapB family.

It is found in the cytoplasm. The enzyme catalyses (S)-2,3,4,5-tetrahydrodipicolinate + NAD(+) + H2O = (2S,4S)-4-hydroxy-2,3,4,5-tetrahydrodipicolinate + NADH + H(+). It carries out the reaction (S)-2,3,4,5-tetrahydrodipicolinate + NADP(+) + H2O = (2S,4S)-4-hydroxy-2,3,4,5-tetrahydrodipicolinate + NADPH + H(+). The protein operates within amino-acid biosynthesis; L-lysine biosynthesis via DAP pathway; (S)-tetrahydrodipicolinate from L-aspartate: step 4/4. Functionally, catalyzes the conversion of 4-hydroxy-tetrahydrodipicolinate (HTPA) to tetrahydrodipicolinate. The polypeptide is 4-hydroxy-tetrahydrodipicolinate reductase (Rhodopseudomonas palustris (strain BisA53)).